Consider the following 251-residue polypeptide: Cytochrome c oxidase subunit 2 (251 aa).

The propeptide at 1–15 (MLDLLRLQLTTFIMN) is removed in mature form. At 16-30 (DVPTPYACYFQDSAT) the chain is on the mitochondrial intermembrane side. A helical transmembrane segment spans residues 31–64 (PNQEGILELHDNIMFYLLVILGLVSWMLYTIVMT). Topologically, residues 65 to 78 (YSKNPIAYKYIKHG) are mitochondrial matrix. Residues 79–108 (QTIEVIWTIFPAVILLIIAFPSFILLYLCD) traverse the membrane as a helical segment. At 109–251 (EVISPAMTIK…PKFLEWLNEQ (143 aa)) the chain is on the mitochondrial intermembrane side. H186, C221, E223, C225, H229, and M232 together coordinate Cu cation. E223 is a binding site for Mg(2+).

Belongs to the cytochrome c oxidase subunit 2 family. In terms of assembly, component of the cytochrome c oxidase (complex IV, CIV), a multisubunit enzyme composed of 12 subunits. The complex is composed of a catalytic core of 3 subunits COX1, COX2 and COX3, encoded in the mitochondrial DNA, and 9 supernumerary subunits COX4, COX5A (or COX5B), COX6, COX7, COX8, COX9, COX12, COX13 and COX26, which are encoded in the nuclear genome. The complex exists as a monomer or a dimer and forms supercomplexes (SCs) in the inner mitochondrial membrane with a dimer of ubiquinol-cytochrome c oxidoreductase (cytochrome b-c1 complex, complex III, CIII), resulting in 2 different assemblies (supercomplexes III(2)IV and III(2)IV(2)). It depends on Cu cation as a cofactor. Post-translationally, the N-terminal sequence of COX2 is processed by IMP1.

It is found in the mitochondrion inner membrane. It catalyses the reaction 4 Fe(II)-[cytochrome c] + O2 + 8 H(+)(in) = 4 Fe(III)-[cytochrome c] + 2 H2O + 4 H(+)(out). Component of the cytochrome c oxidase, the last enzyme in the mitochondrial electron transport chain which drives oxidative phosphorylation. The respiratory chain contains 3 multisubunit complexes succinate dehydrogenase (complex II, CII), ubiquinol-cytochrome c oxidoreductase (cytochrome b-c1 complex, complex III, CIII) and cytochrome c oxidase (complex IV, CIV), that cooperate to transfer electrons derived from NADH and succinate to molecular oxygen, creating an electrochemical gradient over the inner membrane that drives transmembrane transport and the ATP synthase. Cytochrome c oxidase is the component of the respiratory chain that catalyzes the reduction of oxygen to water. Electrons originating from reduced cytochrome c in the intermembrane space (IMS) are transferred via the dinuclear copper A center (CU(A)) of COX2 and heme A of COX1 to the active site in COX1, a binuclear center (BNC) formed by heme A3 and copper B (CU(B)). The BNC reduces molecular oxygen to 2 water molecules unsing 4 electrons from cytochrome c in the IMS and 4 protons from the mitochondrial matrix. COX2 is a catalytic core subunit which transfers the electrons from cytochrome c via its dinuclear copper A center (CU(A)) to the BNC of the COX1. This chain is Cytochrome c oxidase subunit 2 (COX2), found in Saccharomyces cerevisiae (strain ATCC 204508 / S288c) (Baker's yeast).